Reading from the N-terminus, the 395-residue chain is Putative 8-amino-7-oxononanoate synthase (395 aa).

Arg-23 lines the substrate pocket. Residue 110–111 (GF) coordinates pyridoxal 5'-phosphate. Residue His-135 participates in substrate binding. Pyridoxal 5'-phosphate-binding positions include Ser-182, 207–210 (DEAH), and 239–242 (TFSK). Residue Lys-242 is modified to N6-(pyridoxal phosphate)lysine. Thr-356 contributes to the substrate binding site.

This sequence belongs to the class-II pyridoxal-phosphate-dependent aminotransferase family. BioF subfamily. Homodimer. It depends on pyridoxal 5'-phosphate as a cofactor.

The catalysed reaction is 6-carboxyhexanoyl-[ACP] + L-alanine + H(+) = (8S)-8-amino-7-oxononanoate + holo-[ACP] + CO2. It participates in cofactor biosynthesis; biotin biosynthesis. In terms of biological role, catalyzes the decarboxylative condensation of pimeloyl-[acyl-carrier protein] and L-alanine to produce 8-amino-7-oxononanoate (AON), [acyl-carrier protein], and carbon dioxide. The sequence is that of Putative 8-amino-7-oxononanoate synthase (bioF) from Bacillus anthracis.